Consider the following 200-residue polypeptide: MSGFQQHTGLVVPLDAANVDTDAIIPKQFLQKVNRTGFGKHLFHDWRFLDDAGEKANPEFVMNQPRYQDASILLARENFGCGSSREHAPWALADYGIRVMIAPSFADIFYGNSINNQMVPVRLTEQEVDELFTYVHDTEGATITVDLEALSVTANGKTYHFEIDDFRRHCLLNGLDNIGLTLQHEAKIAEYEAKIPSFLK.

The protein belongs to the LeuD family. LeuD type 1 subfamily. In terms of assembly, heterodimer of LeuC and LeuD.

It carries out the reaction (2R,3S)-3-isopropylmalate = (2S)-2-isopropylmalate. The protein operates within amino-acid biosynthesis; L-leucine biosynthesis; L-leucine from 3-methyl-2-oxobutanoate: step 2/4. In terms of biological role, catalyzes the isomerization between 2-isopropylmalate and 3-isopropylmalate, via the formation of 2-isopropylmaleate. The chain is 3-isopropylmalate dehydratase small subunit from Vibrio cholerae serotype O1 (strain ATCC 39541 / Classical Ogawa 395 / O395).